An 89-amino-acid chain; its full sequence is Small ribosomal subunit protein uS15 (89 aa).

The protein belongs to the universal ribosomal protein uS15 family. In terms of assembly, part of the 30S ribosomal subunit. Forms a bridge to the 50S subunit in the 70S ribosome, contacting the 23S rRNA.

Functionally, one of the primary rRNA binding proteins, it binds directly to 16S rRNA where it helps nucleate assembly of the platform of the 30S subunit by binding and bridging several RNA helices of the 16S rRNA. Its function is as follows. Forms an intersubunit bridge (bridge B4) with the 23S rRNA of the 50S subunit in the ribosome. The protein is Small ribosomal subunit protein uS15 of Bacillus pumilus (strain SAFR-032).